We begin with the raw amino-acid sequence, 125 residues long: Small ribosomal subunit protein mS41 (125 aa).

Residues 1 to 10 constitute a mitochondrion transit peptide; sequence MLSIFGCVRA. The interval 103-125 is disordered; the sequence is SFFGGERNRKATVAKWRAEQRNK.

It belongs to the mitochondrion-specific ribosomal protein mS41 family.

Its subcellular location is the mitochondrion. In terms of biological role, involved in telomere length regulation. The polypeptide is Small ribosomal subunit protein mS41 (FYV4) (Candida glabrata (strain ATCC 2001 / BCRC 20586 / JCM 3761 / NBRC 0622 / NRRL Y-65 / CBS 138) (Yeast)).